Consider the following 117-residue polypeptide: G antigen 6 (117 aa).

Residues 1 to 117 are disordered; that stretch reads MSWRGRSTYY…PEEGEKQSQC (117 aa). 2 stretches are compositionally biased toward acidic residues: residues 32 to 45 and 87 to 96; these read FSDE…EEGE and ECEDGPDGQE. The segment covering 103 to 117 has biased composition (basic and acidic residues); the sequence is EEVKTPEEGEKQSQC.

This sequence belongs to the GAGE family. In terms of tissue distribution, expressed in a variety of tumor tissues but not in normal tissues, except testis.

The polypeptide is G antigen 6 (GAGE6) (Homo sapiens (Human)).